Here is a 132-residue protein sequence, read N- to C-terminus: Large-conductance mechanosensitive channel (132 aa).

3 helical membrane-spanning segments follow: residues 8 to 28 (FALK…GAFG), 30 to 50 (IVSS…LGGV), and 67 to 87 (GAFI…FLFI).

Belongs to the MscL family. In terms of assembly, homopentamer.

It localises to the cell membrane. Its function is as follows. Channel that opens in response to stretch forces in the membrane lipid bilayer. May participate in the regulation of osmotic pressure changes within the cell. This is Large-conductance mechanosensitive channel from Bacillus cytotoxicus (strain DSM 22905 / CIP 110041 / 391-98 / NVH 391-98).